A 309-amino-acid polypeptide reads, in one-letter code: Probable HTH-type transcriptional regulator LtrA (309 aa).

In terms of domain architecture, HTH lysR-type spans 1–61; that stretch reads MNLNLLPDLA…QRTTRKLRLS (61 aa). Residues 21–40 constitute a DNA-binding region (H-T-H motif); sequence FSAVARQNGITPSAVSRSVS.

Belongs to the LysR transcriptional regulatory family.

The chain is Probable HTH-type transcriptional regulator LtrA (ltrA) from Klebsiella pneumoniae.